The chain runs to 95 residues: Ferredoxin-4 (95 aa).

Positions 2-95 (DKATLTFTDV…LGGAVKVRPA (94 aa)) constitute a 2Fe-2S ferredoxin-type domain. Residues cysteine 38, cysteine 43, cysteine 46, and cysteine 81 each contribute to the [2Fe-2S] cluster site.

The protein belongs to the 2Fe2S plant-type ferredoxin family. Requires [2Fe-2S] cluster as cofactor.

Ferredoxins are iron-sulfur proteins that transfer electrons in a wide variety of metabolic reactions. This ferredoxin is required for nitrogen fixation. This Rhodobacter capsulatus (Rhodopseudomonas capsulata) protein is Ferredoxin-4 (fdxC).